The primary structure comprises 473 residues: GTPase Der (473 aa).

EngA-type G domains lie at 3–167 (FTVA…GKDR) and 203–378 (LRVA…RVWN). Residues 9–16 (GRPNVGKS), 56–60 (DTAGL), 119–122 (NKSE), 209–216 (GRPNAGKS), 256–260 (DTAGM), and 321–324 (NKWD) each bind GTP. The region spanning 379–463 (KRISTAKLNR…PIRIHFRSAE (85 aa)) is the KH-like domain.

This sequence belongs to the TRAFAC class TrmE-Era-EngA-EngB-Septin-like GTPase superfamily. EngA (Der) GTPase family. As to quaternary structure, associates with the 50S ribosomal subunit.

Its function is as follows. GTPase that plays an essential role in the late steps of ribosome biogenesis. This chain is GTPase Der, found in Rhizobium leguminosarum bv. trifolii (strain WSM2304).